The primary structure comprises 340 residues: KRR1 small subunit processome component homolog (340 aa).

The KH domain occupies 124 to 192 (DIIKIGNLVH…VRDIVLETMN (69 aa)). Residues 228–244 (KNKNISKRKQPKSKKPK) are compositionally biased toward basic residues. 2 disordered regions span residues 228–259 (KNKNISKRKQPKSKKPKKEYTPFPPAQPESKI) and 271–324 (NQEQ…KVDV). The stretch at 269–302 (FLNQEQKQAKRNQERSAKQADAAKKQDERRNKDF) forms a coiled coil. Basic and acidic residues-rich tracts occupy residues 275–301 (KQAKRNQERSAKQADAAKKQDERRNKD) and 309–324 (APSRKRQAEDSSKVDV).

This sequence belongs to the KRR1 family. As to quaternary structure, monomer. Component of the ribosomal small subunit (SSU) processome.

The protein localises to the nucleus. It is found in the nucleolus. Its function is as follows. Required for 40S ribosome biogenesis. Involved in nucleolar processing of pre-18S ribosomal RNA and ribosome assembly. Binds to RNA. Required for female germline development, cell viability during eye development and for survival of dividing cells and epithelial cells during early wing disk development. This Drosophila persimilis (Fruit fly) protein is KRR1 small subunit processome component homolog.